Here is a 160-residue protein sequence, read N- to C-terminus: MELLSLAILSSFFAVANQCAATSPVTSPTTTTTEASVTTTIATSTSTTTVTTTTTVVTAACATCTTAQIGIITGNDGDMTPTSAITTDASGCSVITYTCERTPNVETDIVLITFYSDSQTPTDVGTENGVGTANVVMNCVNGEWVKDGIVINDVECQIIT.

A signal peptide spans 1–18; the sequence is MELLSLAILSSFFAVANQ.

This is an uncharacterized protein from Caenorhabditis elegans.